The sequence spans 979 residues: Pheromone-regulated membrane protein 10 (979 aa).

Disordered regions lie at residues 1–279 (MGKS…FFSK), 295–318 (LRNV…EVDG), 337–411 (YSSL…PQRV), 432–451 (FSTA…PLLD), and 491–528 (ATKH…LPKF). Positions 15-26 (GGKDARSPETRS) are enriched in basic and acidic residues. Positions 29-38 (SRSSTDNRSS) are enriched in low complexity. Residues 54–68 (LDLEEGVDDDADFDW) are compositionally biased toward acidic residues. Positions 77 to 86 (DAQSLDNPFN) are enriched in polar residues. Residues 105-115 (AIERDAVDTIR) show a composition bias toward basic and acidic residues. A compositionally biased stretch (acidic residues) spans 122–135 (EEPDSASDGEDVGM). Basic and acidic residues-rich tracts occupy residues 138–148 (EYQRKRERLVD) and 158–175 (SPRR…HTET). Positions 192–213 (EAGTGTNENGEASSSGMKSSIN) are enriched in polar residues. Positions 253-263 (GAEKGMKSMKD) are enriched in basic and acidic residues. Positions 360–372 (SPSTPSSSPGPES) are enriched in low complexity. A compositionally biased stretch (acidic residues) spans 379-395 (DDYDFDQVDSDGEDSDL). The span at 503-515 (ASGSNSELPSFKN) shows a compositional bias: polar residues. Over residues 516–528 (TRPKKNKKHLPKF) the composition is skewed to basic residues. Transmembrane regions (helical) follow at residues 658 to 678 (WVCV…AFGG), 680 to 700 (WVNL…QFIV), 710 to 730 (VFEI…GSIG), 734 to 754 (ICFG…YIIL), 773 to 793 (FYAI…AALF), 809 to 829 (PISP…ISLI), 832 to 852 (AHWI…VVTY), 864 to 884 (FTAS…SRVW), 886 to 906 (GLAV…GVAS), and 946 to 966 (ITMI…SLIV).

It belongs to the ThrE exporter (TC 2.A.79) family.

It localises to the membrane. This Zygosaccharomyces rouxii (strain ATCC 2623 / CBS 732 / NBRC 1130 / NCYC 568 / NRRL Y-229) protein is Pheromone-regulated membrane protein 10.